The primary structure comprises 731 residues: Alpha-1,4-glucan:maltose-1-phosphate maltosyltransferase (731 aa).

Residues 1–10 show a composition bias toward basic and acidic residues; sequence MEAQHNETEA. Residues 1–31 are disordered; sequence MEAQHNETEAAGKPAAKKTTRTRKPRASKQA. Positions 15 to 27 are enriched in basic residues; it reads AAKKTTRTRKPRA. Alpha-maltose 1-phosphate is bound by residues Lys321, Gln381, and Asp416. Asp451 (nucleophile) is an active-site residue. Alpha-maltose 1-phosphate is bound at residue Asn452. Residue Glu480 is the Proton donor of the active site. Residue 590 to 591 coordinates alpha-maltose 1-phosphate; it reads KF.

This sequence belongs to the glycosyl hydrolase 13 family. GlgE subfamily. As to quaternary structure, homodimer.

It catalyses the reaction alpha-maltose 1-phosphate + [(1-&gt;4)-alpha-D-glucosyl](n) = [(1-&gt;4)-alpha-D-glucosyl](n+2) + phosphate. In terms of biological role, maltosyltransferase that uses maltose 1-phosphate (M1P) as the sugar donor to elongate linear or branched alpha-(1-&gt;4)-glucans. Is involved in a branched alpha-glucan biosynthetic pathway from trehalose, together with TreS, Mak and GlgB. This Bifidobacterium animalis subsp. lactis (strain Bl-04 / DGCC2908 / RB 4825 / SD5219) protein is Alpha-1,4-glucan:maltose-1-phosphate maltosyltransferase.